The sequence spans 235 residues: Sugar fermentation stimulation protein homolog (235 aa).

It belongs to the SfsA family.

This Nitrosococcus oceani (strain ATCC 19707 / BCRC 17464 / JCM 30415 / NCIMB 11848 / C-107) protein is Sugar fermentation stimulation protein homolog.